We begin with the raw amino-acid sequence, 187 residues long: MAQPTPHAGLQEGLIHEPASEHGGGFPPFQSTTFAAQILWLAIAFGLLYYLMSRVAVPRIAGLLHDRQARLAADLDEASRMKTGADSARGAYERSLKEAQDKAKGIAQATRDSLAAEAETRRKALEADLAAKLAESEAQIRARTATAMGSVREVAADAATAIVERLIGQSPDRAAVEAAYDRTQTVH.

A helical transmembrane segment spans residues 32–52 (TTFAAQILWLAIAFGLLYYLM).

Belongs to the ATPase B chain family. As to quaternary structure, F-type ATPases have 2 components, F(1) - the catalytic core - and F(0) - the membrane proton channel. F(1) has five subunits: alpha(3), beta(3), gamma(1), delta(1), epsilon(1). F(0) has three main subunits: a(1), b(2) and c(10-14). The alpha and beta chains form an alternating ring which encloses part of the gamma chain. F(1) is attached to F(0) by a central stalk formed by the gamma and epsilon chains, while a peripheral stalk is formed by the delta and b chains.

It is found in the cell inner membrane. Functionally, f(1)F(0) ATP synthase produces ATP from ADP in the presence of a proton or sodium gradient. F-type ATPases consist of two structural domains, F(1) containing the extramembraneous catalytic core and F(0) containing the membrane proton channel, linked together by a central stalk and a peripheral stalk. During catalysis, ATP synthesis in the catalytic domain of F(1) is coupled via a rotary mechanism of the central stalk subunits to proton translocation. In terms of biological role, component of the F(0) channel, it forms part of the peripheral stalk, linking F(1) to F(0). The b'-subunit is a diverged and duplicated form of b found in plants and photosynthetic bacteria. This chain is ATP synthase subunit b 2 (atpF2), found in Methylobacterium sp. (strain 4-46).